Consider the following 206-residue polypeptide: MELKLLQADGQLGTGVSASPEVFGRDYNEALVHQIVVAYQANARSGNRKQKDREEVKHTTKKPWRQKGTGRARAGMSSSPLWRGGGRIFPNSPEENFSQKVNKKMYRAGMRSIYSQLAREGRINVVDSLSVDAPKTKLLADKFRAMGLDSVLVITDNLDENLFLASRNLAHVLVVEPRHADPLSLVHYKKVLVTKAAVAQIEELLK.

Residues 43-78 form a disordered region; that stretch reads ARSGNRKQKDREEVKHTTKKPWRQKGTGRARAGMSS. Positions 49 to 58 are enriched in basic and acidic residues; that stretch reads KQKDREEVKH. Positions 59 to 70 are enriched in basic residues; sequence TTKKPWRQKGTG.

The protein belongs to the universal ribosomal protein uL4 family. As to quaternary structure, part of the 50S ribosomal subunit.

One of the primary rRNA binding proteins, this protein initially binds near the 5'-end of the 23S rRNA. It is important during the early stages of 50S assembly. It makes multiple contacts with different domains of the 23S rRNA in the assembled 50S subunit and ribosome. In terms of biological role, forms part of the polypeptide exit tunnel. In Ralstonia nicotianae (strain ATCC BAA-1114 / GMI1000) (Ralstonia solanacearum), this protein is Large ribosomal subunit protein uL4.